The sequence spans 252 residues: Phosphoglycolate phosphatase (252 aa).

D13 serves as the catalytic Nucleophile. D13, D15, and D192 together coordinate Mg(2+).

Belongs to the HAD-like hydrolase superfamily. CbbY/CbbZ/Gph/YieH family. Monomer. It depends on Mg(2+) as a cofactor. Chloride is required as a cofactor.

It catalyses the reaction 2-phosphoglycolate + H2O = glycolate + phosphate. Its pathway is organic acid metabolism; glycolate biosynthesis; glycolate from 2-phosphoglycolate: step 1/1. In terms of biological role, specifically catalyzes the dephosphorylation of 2-phosphoglycolate. Is involved in the dissimilation of the intracellular 2-phosphoglycolate formed during the DNA repair of 3'-phosphoglycolate ends, a major class of DNA lesions induced by oxidative stress. This Salmonella choleraesuis (strain SC-B67) protein is Phosphoglycolate phosphatase.